A 411-amino-acid polypeptide reads, in one-letter code: Lissencephaly-1 homolog (411 aa).

One can recognise a LisH domain in the interval 9–41 (QREELNQAIADYLGSNGYADSLETFRKEADLST). The stretch at 56-83 (TSVIRLQKKVMELEAKLTEAEKEVIEGA) forms a coiled coil. 7 WD repeats span residues 106 to 147 (GHRA…RSLK), 148 to 187 (GHTD…ECIK), 191 to 230 (GHDH…CVKT), 233 to 272 (GHRE…CKVE), 275 to 334 (DHEH…CLLT), 337 to 376 (GHDN…CMKT), and 379 to 411 (AHQH…WECR).

This sequence belongs to the WD repeat LIS1/nudF family.

Its subcellular location is the cytoplasm. The protein localises to the cytoskeleton. It localises to the microtubule organizing center. The protein resides in the centrosome. Positively regulates the activity of the minus-end directed microtubule motor protein dynein. May enhance dynein-mediated microtubule sliding by targeting dynein to the microtubule plus end. Required for several dynein- and microtubule-dependent processes. This Drosophila sechellia (Fruit fly) protein is Lissencephaly-1 homolog.